The sequence spans 162 residues: Crossover junction endodeoxyribonuclease RuvC (162 aa).

Active-site residues include D8, E69, and H141. Mg(2+) contacts are provided by D8, E69, and H141.

This sequence belongs to the RuvC family. Homodimer which binds Holliday junction (HJ) DNA. The HJ becomes 2-fold symmetrical on binding to RuvC with unstacked arms; it has a different conformation from HJ DNA in complex with RuvA. In the full resolvosome a probable DNA-RuvA(4)-RuvB(12)-RuvC(2) complex forms which resolves the HJ. Requires Mg(2+) as cofactor.

The protein resides in the cytoplasm. It catalyses the reaction Endonucleolytic cleavage at a junction such as a reciprocal single-stranded crossover between two homologous DNA duplexes (Holliday junction).. The RuvA-RuvB-RuvC complex processes Holliday junction (HJ) DNA during genetic recombination and DNA repair. Endonuclease that resolves HJ intermediates. Cleaves cruciform DNA by making single-stranded nicks across the HJ at symmetrical positions within the homologous arms, yielding a 5'-phosphate and a 3'-hydroxyl group; requires a central core of homology in the junction. The consensus cleavage sequence is 5'-(A/T)TT(C/G)-3'. Cleavage occurs on the 3'-side of the TT dinucleotide at the point of strand exchange. HJ branch migration catalyzed by RuvA-RuvB allows RuvC to scan DNA until it finds its consensus sequence, where it cleaves and resolves the cruciform DNA. This Wolbachia pipientis wMel protein is Crossover junction endodeoxyribonuclease RuvC.